We begin with the raw amino-acid sequence, 72 residues long: SRY-related protein ADW4 (72 aa).

Residues 1–69 (VKRPMNAFMV…KHMADYPNYK (69 aa)) constitute a DNA-binding region (HMG box).

The protein resides in the nucleus. This Alligator mississippiensis (American alligator) protein is SRY-related protein ADW4.